A 40-amino-acid chain; its full sequence is uncharacterized protein (40 aa).

This is an uncharacterized protein from Haemophilus influenzae (strain ATCC 51907 / DSM 11121 / KW20 / Rd).